The chain runs to 406 residues: MSGCPFLGKSFGYAFKPLSAQGSEEDKSQAGVNRASKGGLIYGNYLQLEKVLNAQELQSEMKGNKIHDEHLFIITHQAYELWFKQILWELDSVREIFQNGHVRDERNMLKVITRMHRVVVILKLLVQQFSVLETMTALDFNDFREYLSPASGFQSLQFRLLENKIGVLQSLRVPYNRRHYRDNFRGKDNELLLKSEQERTLLQLVEAWLERTPGLEPHGFNFWGKLEKNIVKGLEEEFTKIQAKEESEEKEEQMAEFQKQKEVLLSLFDEKRHEHLLSKGERRLSYKALQGALMIYFYREEPRFQVPFQLLTFLMDVDSLMTKWRYNHVCLVHRMLGSKAGTGGSSGYQYLRSTVSDRYKVFVDLFNLSTYLVPRHWIPKMNPVIHKFLYTAEYCDSSYFSSDESD.

Ser19 carries the phosphoserine modification. Substrate-binding positions include 72–76 (FIITH) and Arg144. His328 contacts heme. A substrate-binding site is contributed by Thr342.

It belongs to the tryptophan 2,3-dioxygenase family. In terms of assembly, homotetramer. Dimer of dimers. Heme serves as cofactor.

The catalysed reaction is L-tryptophan + O2 = N-formyl-L-kynurenine. The protein operates within amino-acid degradation; L-tryptophan degradation via kynurenine pathway; L-kynurenine from L-tryptophan: step 1/2. Heme-dependent dioxygenase that catalyzes the oxidative cleavage of the L-tryptophan (L-Trp) pyrrole ring and converts L-tryptophan to N-formyl-L-kynurenine. Catalyzes the oxidative cleavage of the indole moiety. This chain is Tryptophan 2,3-dioxygenase, found in Bos taurus (Bovine).